A 340-amino-acid polypeptide reads, in one-letter code: Spermidine synthase 2 (340 aa).

The segment at 1-41 is disordered; that stretch reads MSSTQEASVTDLPVKRPREAEEDNNGGAMETENGGGEIKEP. N-acetylserine is present on Ser2. Positions 49–286 constitute a PABS domain; that stretch reads PGWFSEISPM…GVIGFMLCSS (238 aa). Position 80 (Gln80) interacts with S-adenosyl 3-(methylsulfanyl)propylamine. Tyr110 provides a ligand contact to putrescine. S-adenosyl 3-(methylsulfanyl)propylamine is bound by residues Gln111, Asp135, Glu155, 186 to 187, and Asp205; that span reads DG. Residue Asp205 is the Proton acceptor of the active site. Residues 205-208 and Tyr274 contribute to the putrescine site; that span reads DSSD.

The protein belongs to the spermidine/spermine synthase family. Heterodimer. Component of a multiprotein complex. Interacts with SPMS and SPDSYN1.

It carries out the reaction S-adenosyl 3-(methylsulfanyl)propylamine + putrescine = S-methyl-5'-thioadenosine + spermidine + H(+). It participates in amine and polyamine biosynthesis; spermidine biosynthesis; spermidine from putrescine: step 1/1. In Arabidopsis thaliana (Mouse-ear cress), this protein is Spermidine synthase 2 (SPDSYN2).